The primary structure comprises 459 residues: Argininosuccinate lyase (459 aa).

This sequence belongs to the lyase 1 family. Argininosuccinate lyase subfamily.

It is found in the cytoplasm. The catalysed reaction is 2-(N(omega)-L-arginino)succinate = fumarate + L-arginine. It functions in the pathway amino-acid biosynthesis; L-arginine biosynthesis; L-arginine from L-ornithine and carbamoyl phosphate: step 3/3. The protein is Argininosuccinate lyase of Photorhabdus laumondii subsp. laumondii (strain DSM 15139 / CIP 105565 / TT01) (Photorhabdus luminescens subsp. laumondii).